Here is a 432-residue protein sequence, read N- to C-terminus: Adenylosuccinate synthetase (432 aa).

GTP-binding positions include 12–18 (GDEGKGK) and 40–42 (GHT). The active-site Proton acceptor is Asp-13. Positions 13 and 40 each coordinate Mg(2+). Residues 13–16 (DEGK), 38–41 (NAGH), Thr-130, Arg-144, Gln-225, Thr-240, and Arg-304 each bind IMP. His-41 functions as the Proton donor in the catalytic mechanism. 300–306 (ATTGRRR) lines the substrate pocket. GTP is bound by residues Arg-306, 332–334 (KLD), and 415–417 (SVG).

Belongs to the adenylosuccinate synthetase family. As to quaternary structure, homodimer. The cofactor is Mg(2+).

It localises to the cytoplasm. The catalysed reaction is IMP + L-aspartate + GTP = N(6)-(1,2-dicarboxyethyl)-AMP + GDP + phosphate + 2 H(+). It functions in the pathway purine metabolism; AMP biosynthesis via de novo pathway; AMP from IMP: step 1/2. Plays an important role in the de novo pathway of purine nucleotide biosynthesis. Catalyzes the first committed step in the biosynthesis of AMP from IMP. This is Adenylosuccinate synthetase from Syntrophus aciditrophicus (strain SB).